The primary structure comprises 475 residues: Cytosolic non-specific dipeptidase (475 aa).

Lys-9 bears the N6-acetyllysine mark. The residue at position 58 (Ser-58) is a Phosphoserine. His-99 provides a ligand contact to Mn(2+). The active site involves Asp-101. Asp-132 provides a ligand contact to Mn(2+). The Proton acceptor role is filled by Glu-166. Residues 166-167 (EE), Asp-195, His-228, Thr-330, Arg-343, Ser-417, and His-445 each bind substrate. Mn(2+) contacts are provided by Glu-167 and Asp-195. Residue His-445 participates in Mn(2+) binding.

This sequence belongs to the peptidase M20A family. As to quaternary structure, homodimer. Mn(2+) is required as a cofactor.

It localises to the cytoplasm. It carries out the reaction Hydrolysis of dipeptides, preferentially hydrophobic dipeptides including prolyl amino acids.. It catalyses the reaction L-threonyl-L-threonine + H2O = 2 L-threonine. The enzyme catalyses L-threonyl-L-serine + H2O = L-threonine + L-serine. The catalysed reaction is L-seryl-L-threonine + H2O = L-threonine + L-serine. It carries out the reaction L-cysteinylglycine + H2O = L-cysteine + glycine. It catalyses the reaction L-alanyl-L-cysteine + H2O = L-cysteine + L-alanine. The enzyme catalyses (S)-lactate + L-phenylalanine = N-[(S)-lactoyl]-L-phenylalanine + H2O. Catalyzes the peptide bond hydrolysis in dipeptides, displaying a non-redundant activity toward threonyl dipeptides. Mediates threonyl dipeptide catabolism in a tissue-specific way. Has high dipeptidase activity toward cysteinylglycine, an intermediate metabolite in glutathione metabolism. Metabolizes N-lactoyl-amino acids, both through hydrolysis to form lactic acid and amino acids, as well as through their formation by reverse proteolysis. Plays a role in the regulation of cell cycle arrest and apoptosis. This chain is Cytosolic non-specific dipeptidase (CNDP2), found in Bos taurus (Bovine).